The primary structure comprises 342 residues: Protein RecA (342 aa).

Residue G65 to T72 coordinates ATP.

It belongs to the RecA family.

Its subcellular location is the cytoplasm. In terms of biological role, can catalyze the hydrolysis of ATP in the presence of single-stranded DNA, the ATP-dependent uptake of single-stranded DNA by duplex DNA, and the ATP-dependent hybridization of homologous single-stranded DNAs. It interacts with LexA causing its activation and leading to its autocatalytic cleavage. In Caldanaerobacter subterraneus subsp. tengcongensis (strain DSM 15242 / JCM 11007 / NBRC 100824 / MB4) (Thermoanaerobacter tengcongensis), this protein is Protein RecA.